Here is a 273-residue protein sequence, read N- to C-terminus: Nitrogenase iron protein 2 (273 aa).

Gly-8 to Ser-15 is a binding site for ATP. Cys-95 lines the [4Fe-4S] cluster pocket. Arg-98 carries the ADP-ribosylarginine; by dinitrogenase reductase ADP-ribosyltransferase modification. Position 130 (Cys-130) interacts with [4Fe-4S] cluster.

Belongs to the NifH/BchL/ChlL family. Homodimer. It depends on [4Fe-4S] cluster as a cofactor. Post-translationally, the reversible ADP-ribosylation of Arg-98 inactivates the nitrogenase reductase and regulates nitrogenase activity.

The catalysed reaction is N2 + 8 reduced [2Fe-2S]-[ferredoxin] + 16 ATP + 16 H2O = H2 + 8 oxidized [2Fe-2S]-[ferredoxin] + 2 NH4(+) + 16 ADP + 16 phosphate + 6 H(+). In terms of biological role, the key enzymatic reactions in nitrogen fixation are catalyzed by the nitrogenase complex, which has 2 components: the iron protein and the molybdenum-iron protein. This Methanosarcina barkeri protein is Nitrogenase iron protein 2 (nifH2).